We begin with the raw amino-acid sequence, 644 residues long: Adhesion G-protein coupled receptor F2 (644 aa).

The first 18 residues, Met1–Ser18, serve as a signal peptide directing secretion. Residues Cys19–Tyr386 are Extracellular-facing. 4 N-linked (GlcNAc...) asparagine glycosylation sites follow: Asn155, Asn219, Asn293, and Asn311. The GAIN-B domain occupies Ser233–Glu377. Disulfide bonds link Cys329–Cys356 and Cys344–Cys358. The segment at Cys329–Glu377 is GPS. Residues Ile387 to Trp407 form a helical membrane-spanning segment. Topologically, residues Ser408–Cys422 are cytoplasmic. A helical membrane pass occupies residues Ile423–Leu443. At Ser444–Leu465 the chain is on the extracellular side. Residues Ser466 to Phe486 traverse the membrane as a helical segment. Residues His487–Cys493 are Cytoplasmic-facing. Residues Leu494–Leu514 form a helical membrane-spanning segment. The Extracellular portion of the chain corresponds to Ala515–Ala541. A helical membrane pass occupies residues Phe542–Ile562. Over Lys563–Lys585 the chain is Cytoplasmic. A helical transmembrane segment spans residues Asn586–Ile606. The Extracellular portion of the chain corresponds to Asn607–Ser610. The helical transmembrane segment at Leu611–Val631 threads the bilayer.

This sequence belongs to the G-protein coupled receptor 2 family. Adhesion G-protein coupled receptor (ADGR) subfamily. In terms of tissue distribution, mainly expressed in skin and heart, and very weakly in lung and spleen. Detected in all epidermal layers of skin.

Its subcellular location is the membrane. Orphan receptor. The sequence is that of Adhesion G-protein coupled receptor F2 (Adgrf2) from Mus musculus (Mouse).